The following is a 337-amino-acid chain: tRNA-dihydrouridine synthase B (337 aa).

FMN contacts are provided by residues 19-21 (PMA) and Gln-73. Cys-103 functions as the Proton donor in the catalytic mechanism. FMN contacts are provided by residues Lys-142, 203–205 (NGD), and 227–228 (GR).

This sequence belongs to the Dus family. DusB subfamily. The cofactor is FMN.

It catalyses the reaction a 5,6-dihydrouridine in tRNA + NAD(+) = a uridine in tRNA + NADH + H(+). The enzyme catalyses a 5,6-dihydrouridine in tRNA + NADP(+) = a uridine in tRNA + NADPH + H(+). Functionally, catalyzes the synthesis of 5,6-dihydrouridine (D), a modified base found in the D-loop of most tRNAs, via the reduction of the C5-C6 double bond in target uridines. In Pseudomonas syringae pv. tomato (strain ATCC BAA-871 / DC3000), this protein is tRNA-dihydrouridine synthase B.